Here is a 377-residue protein sequence, read N- to C-terminus: MSAPTHTHSPLYLGLMSGTSADGIDAALVRFDDASHRRCELVAGITVGWEPQLREALVALGQGAEQMAIDRLGRLDAQVGLAFADAANQLIAEAGVAREQIRAIGSHGQTIRHRPQADPAFTWQIGDASRIAEHTGITTAADFRRRDVAAGGQGAPLMPAFHLAMLGASDEDRAVLNLGGIGNLTLIPRDGAVLGFDTGPANALLDSWCQQHRGTPFDADGAFAASGKVDAALLHALLADPWFALPPPKSTGREQFHLAWALQAMGTATLRPADVQATLLELTAATVADALLRHQPTTRRVLVCGGGVRNPVLLARLAARLPGVVVESSARHGLDPDYLEAMGFAWLAAELLAGRPANLPSVTGAAGPRLLGAIYPA.

18–25 (GTSADGID) is an ATP binding site.

Belongs to the anhydro-N-acetylmuramic acid kinase family.

The catalysed reaction is 1,6-anhydro-N-acetyl-beta-muramate + ATP + H2O = N-acetyl-D-muramate 6-phosphate + ADP + H(+). It participates in amino-sugar metabolism; 1,6-anhydro-N-acetylmuramate degradation. Its pathway is cell wall biogenesis; peptidoglycan recycling. In terms of biological role, catalyzes the specific phosphorylation of 1,6-anhydro-N-acetylmuramic acid (anhMurNAc) with the simultaneous cleavage of the 1,6-anhydro ring, generating MurNAc-6-P. Is required for the utilization of anhMurNAc either imported from the medium or derived from its own cell wall murein, and thus plays a role in cell wall recycling. This chain is Anhydro-N-acetylmuramic acid kinase, found in Xanthomonas campestris pv. campestris (strain 8004).